Reading from the N-terminus, the 343-residue chain is Cytoplasmic tRNA 2-thiolation protein 1 (343 aa).

Belongs to the TtcA family. CTU1/NCS6/ATPBD3 subfamily.

It is found in the cytoplasm. It participates in tRNA modification; 5-methoxycarbonylmethyl-2-thiouridine-tRNA biosynthesis. Its function is as follows. Plays a central role in 2-thiolation of mcm(5)S(2)U at tRNA wobble positions of tRNA(Lys), tRNA(Glu) and tRNA(Gln). Directly binds tRNAs and probably acts by catalyzing adenylation of tRNAs, an intermediate required for 2-thiolation. It is unclear whether it acts as a sulfurtransferase that transfers sulfur from thiocarboxylated URM1 onto the uridine of tRNAs at wobble position. The protein is Cytoplasmic tRNA 2-thiolation protein 1 of Drosophila mojavensis (Fruit fly).